The primary structure comprises 93 residues: Parbolysin P2 (93 aa).

2 cysteine pairs are disulfide-bonded: Cys16-Cys37 and Cys22-Cys33.

It belongs to the worm cytolysin family. Localized within the skin and proboscis and are most readily isolated from body mucus secretions.

The protein localises to the secreted. Functionally, cytolysin that shows hemolytic activity (on bovine erythrocytes, HC(50)=5.75 mg/ml). This hemolytic activity is completely inhibited by small unilamelar vesicles composed of PC/PG, PC/PI and PC/PS in 1:1 molar ratios (with at least 100 mg/ml concentration). In Parborlasia corrugatus (Antarctic nemertean worm), this protein is Parbolysin P2.